The sequence spans 387 residues: 26S proteasome regulatory subunit 6B homolog (387 aa).

175 to 182 (GPPGTGKT) contributes to the ATP binding site.

It belongs to the AAA ATPase family. The 26S proteasome consists of a 20S proteasome core and two 19S regulatory subunits. The 20S proteasome core is composed of 28 subunits that are arranged in four stacked rings, resulting in a barrel-shaped structure. The two end rings are each formed by seven alpha subunits, and the two central rings are each formed by seven beta subunits. The catalytic chamber with the active sites is on the inside of the barrel.

The protein localises to the cytoplasm. Its subcellular location is the nucleus. In terms of biological role, acts as a regulatory subunit of the 26S proteasome which degrades poly-ubiquitinated proteins in the cytoplasm and in the nucleus. It is essential for the regulated turnover of proteins and for the removal of misfolded proteins. The proteasome is a multicatalytic proteinase complex that is characterized by its ability to cleave peptides with Arg, Phe, Tyr, Leu, and Glu adjacent to the leaving group at neutral or slightly basic pH. The sequence is that of 26S proteasome regulatory subunit 6B homolog from Encephalitozoon cuniculi (strain GB-M1) (Microsporidian parasite).